We begin with the raw amino-acid sequence, 240 residues long: Ribonuclease HII (240 aa).

The RNase H type-2 domain occupies 27–226; that stretch reads GPVAGVDEAG…REARSLRLED (200 aa). Residues Asp-33, Glu-34, and Asp-127 each coordinate a divalent metal cation.

It belongs to the RNase HII family. Requires Mn(2+) as cofactor. The cofactor is Mg(2+).

It localises to the cytoplasm. The enzyme catalyses Endonucleolytic cleavage to 5'-phosphomonoester.. Its function is as follows. Endonuclease that specifically degrades the RNA of RNA-DNA hybrids. In Frankia casuarinae (strain DSM 45818 / CECT 9043 / HFP020203 / CcI3), this protein is Ribonuclease HII.